The following is a 146-amino-acid chain: MKLHELHSAEGSRRNRKRVGRGTSSGYGKTSGRGQKGQLARQGGHTRLGFEGGQMPLFRTMPKRGFKNINRKEYAIVNLDDLNKFNDGSEVTVETLKENGLVKKELSGVKLLGNGELKVKLTVKVNKVSAAAKKAVEAAGGTVEVI.

Residues methionine 1–arginine 13 show a composition bias toward basic and acidic residues. The segment at methionine 1–methionine 55 is disordered. A compositionally biased stretch (gly residues) spans threonine 23–glutamine 35.

It belongs to the universal ribosomal protein uL15 family. As to quaternary structure, part of the 50S ribosomal subunit.

Binds to the 23S rRNA. In Lactobacillus helveticus (strain DPC 4571), this protein is Large ribosomal subunit protein uL15.